The sequence spans 528 residues: 3-ketoacyl-CoA synthase 2 (528 aa).

2 helical membrane passes run 36 to 56 (LGYH…VGLL) and 78 to 98 (FHFL…TLYF). An FAE domain is found at 97–388 (YFTTRPRRIF…FFATLVARKV (292 aa)). Active-site residues include Cys241, His320, His407, His411, and Asn444.

This sequence belongs to the thiolase-like superfamily. Chalcone/stilbene synthases family. Expressed in siliques, flowers and stems. In young seedlings, expressed in the central cylinder of primary roots, in emerging lateral roots and in their root cap, but not in aboveground tissues such as hypocotyls, cotyledons and leaves. Expressed in sepals in mature flowers and in the chalaza and micropyle region of developing seeds shortly prior to or just after the detachment from the funiculus. Expressed in roots, flowers, cauline leaves and siliques.

The protein resides in the membrane. The catalysed reaction is a very-long-chain acyl-CoA + malonyl-CoA + H(+) = a very-long-chain 3-oxoacyl-CoA + CO2 + CoA. It functions in the pathway lipid metabolism; fatty acid biosynthesis. Its activity is regulated as follows. Inhibited by K3 herbicides such as allidochlor, anilofos, cafenstrole and flufenacet. Strongly inhibited by metazachlor. Functionally, mediates the synthesis of VLCFAs from 22 to 26 carbons in length (e.g. C22, C24, C26). Involved in the elongation of C20 fatty acid suberin precursors. Functionally redundant with KCS20 in the two-carbon elongation of C22 fatty acids that is required for cuticular wax and root suberin biosynthesis. The polypeptide is 3-ketoacyl-CoA synthase 2 (Arabidopsis thaliana (Mouse-ear cress)).